A 196-amino-acid chain; its full sequence is UPF0316 protein LBL_2483 (196 aa).

3 helical membrane-spanning segments follow: residues 12 to 32 (YCVL…IGTI), 44 to 64 (IAAS…TQVI), and 70 to 90 (ALCY…GMIL).

It belongs to the UPF0316 family.

Its subcellular location is the cell membrane. The chain is UPF0316 protein LBL_2483 from Leptospira borgpetersenii serovar Hardjo-bovis (strain L550).